The sequence spans 245 residues: DNA repair protein RecO (245 aa).

It belongs to the RecO family.

Its function is as follows. Involved in DNA repair and RecF pathway recombination. This Pectobacterium atrosepticum (strain SCRI 1043 / ATCC BAA-672) (Erwinia carotovora subsp. atroseptica) protein is DNA repair protein RecO.